We begin with the raw amino-acid sequence, 333 residues long: Sodium/bile acid cotransporter 7 (333 aa).

Residues 1 to 10 are Cytoplasmic-facing; sequence MGLLERLRKE. Residues 11-31 traverse the membrane as a helical segment; sequence WFIAGIALVIAAARLEPAVGV. Residues 32 to 37 lie on the Extracellular side of the membrane; sequence KGGPLK. The helical transmembrane segment at 38–58 threads the bilayer; that stretch reads PEITITYIAVSAIFFNSGLSL. The Cytoplasmic segment spans residues 59–71; that stretch reads KTEELTSALMHVK. The helical transmembrane segment at 72–92 threads the bilayer; the sequence is LHLFVQIFTLVFFPTAIWLFL. At 93–103 the chain is on the extracellular side; the sequence is QLLSITPINEW. A helical membrane pass occupies residues 104–124; sequence LLKGLQTVGCMPPPVSSAVIL. At 125–126 the chain is on the cytoplasmic side; that stretch reads TK. The chain crosses the membrane as a helical span at residues 127 to 147; the sequence is AVGGNEAAAIFNSAFGSFLLG. Residues 148–151 are Extracellular-facing; it reads SSSS. A helical transmembrane segment spans residues 152 to 172; that stretch reads VPFTSIFSQLFMTVVVPLIIG. Topologically, residues 173 to 189 are cytoplasmic; the sequence is QIVRRYIKDWLERRKPP. A helical transmembrane segment spans residues 190–210; it reads FGTISSCVLLMIIYTTFCDTF. Topologically, residues 211 to 222 are extracellular; it reads ANPNIDLDKFSL. Residues 223-243 traverse the membrane as a helical segment; the sequence is IIIVFIIFSVQMSFMFLTFLF. Over 244–258 the chain is Cytoplasmic; sequence STRSNSGFTPADTVA. The helical transmembrane segment at 259-279 threads the bilayer; it reads IIFCSTHKSLTLGIPMLKIVF. Over 280 to 286 the chain is Extracellular; sequence AGYEHLS. A helical membrane pass occupies residues 287-307; sequence LISVPLLIYHPAQILLGSLLV. The Cytoplasmic portion of the chain corresponds to 308 to 333; sequence PTIKSWMVSRQKALKLTRQPKVPVKV.

Belongs to the bile acid:sodium symporter (BASS) (TC 2.A.28) family.

The protein resides in the cell membrane. It localises to the endoplasmic reticulum membrane. Its subcellular location is the golgi apparatus membrane. Involved in teeth and skeletal development. Has an essential role in the biosynthesis and trafficking of glycosaminoglycans and glycoproteins to produce a proper functioning extracellular matrix. Required for extracellular matrix mineralization. Also involved in the regulation of cellular calcium homeostasis. Does not show transport activity towards bile acids or steroid sulfates. The sequence is that of Sodium/bile acid cotransporter 7 (SLC10A7) from Gallus gallus (Chicken).